Reading from the N-terminus, the 152-residue chain is Deoxyuridine 5'-triphosphate nucleotidohydrolase (152 aa).

Residues 71–73, Asn-84, 88–90, and Met-98 contribute to the substrate site; these read RSG and LID.

This sequence belongs to the dUTPase family. Homotrimer. Mg(2+) is required as a cofactor.

It catalyses the reaction dUTP + H2O = dUMP + diphosphate + H(+). Its pathway is pyrimidine metabolism; dUMP biosynthesis; dUMP from dCTP (dUTP route): step 2/2. In terms of biological role, this enzyme is involved in nucleotide metabolism: it produces dUMP, the immediate precursor of thymidine nucleotides and it decreases the intracellular concentration of dUTP so that uracil cannot be incorporated into DNA. The sequence is that of Deoxyuridine 5'-triphosphate nucleotidohydrolase from Escherichia coli O1:K1 / APEC.